Here is a 447-residue protein sequence, read N- to C-terminus: Phosphoglucosamine mutase (447 aa).

The Phosphoserine intermediate role is filled by serine 102. Residues serine 102, aspartate 241, aspartate 243, and aspartate 245 each coordinate Mg(2+). Residue serine 102 is modified to Phosphoserine.

It belongs to the phosphohexose mutase family. Requires Mg(2+) as cofactor. Post-translationally, activated by phosphorylation.

The catalysed reaction is alpha-D-glucosamine 1-phosphate = D-glucosamine 6-phosphate. In terms of biological role, catalyzes the conversion of glucosamine-6-phosphate to glucosamine-1-phosphate. In Pseudoalteromonas atlantica (strain T6c / ATCC BAA-1087), this protein is Phosphoglucosamine mutase.